The chain runs to 130 residues: ATP synthase epsilon chain (130 aa).

This sequence belongs to the ATPase epsilon chain family. F-type ATPases have 2 components, CF(1) - the catalytic core - and CF(0) - the membrane proton channel. CF(1) has five subunits: alpha(3), beta(3), gamma(1), delta(1), epsilon(1). CF(0) has three main subunits: a, b and c.

Its subcellular location is the cell inner membrane. Its function is as follows. Produces ATP from ADP in the presence of a proton gradient across the membrane. This Campylobacter lari (strain RM2100 / D67 / ATCC BAA-1060) protein is ATP synthase epsilon chain.